The primary structure comprises 424 residues: Appressorium protein ROW1 (424 aa).

The first 21 residues, 1–21 (MTKLTLTVALVSALLASGASA), serve as a signal peptide directing secretion. 4 disordered regions span residues 19–54 (ASAQ…WQPK), 69–90 (ANRI…GYNT), 278–304 (SGST…CSSV), and 327–398 (SSSA…TQGA). At 22-403 (QQPTGTGNGP…NTQGAASSAS (382 aa)) the chain is on the extracellular side. The span at 37-54 (TDLNRNQPTKSWTQWQPK) shows a compositional bias: polar residues. 2 stretches are compositionally biased toward low complexity: residues 295 to 304 (APSSSQCSSV) and 327 to 347 (SSSA…SASS). The span at 362–382 (SGTGSGSGSGSGSGSGSGSGS) shows a compositional bias: gly residues. Over residues 383–398 (SSGSSSSGSSSNTQGA) the composition is skewed to low complexity. The chain crosses the membrane as a helical span at residues 404–424 (SLTISVGLAGLVAIGAAAFAL).

The protein resides in the cell membrane. Its subcellular location is the secreted. In terms of biological role, plays a role in the formation of the appressorium, a specialized infection structure with the purpose of penetrating the host surface, and is required for proper remodeling of the appressorium wall and vesicle secretion. The chain is Appressorium protein ROW1 from Mycosarcoma maydis (Corn smut fungus).